The primary structure comprises 372 residues: Protein phosphatase Mn(2+)-dependent 1K (372 aa).

A mitochondrion-targeting transit peptide spans M1–Q29. The critical for association with the BCKDH complex stretch occupies residues R46–W61. The region spanning N94–F346 is the PPM-type phosphatase domain. Mn(2+) is bound by residues D127 and G128. Residue S248 is modified to Phosphoserine. Mn(2+)-binding residues include D298 and D337.

This sequence belongs to the PP2C family. As to quaternary structure, monomer. Interacts with E1 and E2 components of the branched-chain alpha-ketoacid dehydrogenase (BCKDH) complex; this interaction requires colocalization in mitochondria. Interacts with BCKDHA but not with BCKDHB of the E1 component. Interacts with the 24-meric E2 core composed of DBT monomers with a 24:1 stoichiometry; the N-terminal region (residues 49-61) of PPM1K and C-terminal linker of the lipoyl domain of DBT (residues 145-160) are critical for this interaction, whereas the lipoyl prosthetic group is dispensable. Competes with BCKDK for binding to the E2 core; this interaction is modulated by branched-chain alpha-keto acids. At steady state, BCKDH holoenzyme preferentially binds BCKDK and BCKDHA is phosphorylated. In response to high levels of branched-chain alpha-keto acids, the inhibitory BCKDK is replaced by activating PPM1K leading to BCKDHA dephosphorylation and BCAA degradation. Requires Mn(2+) as cofactor. As to expression, highly expressed in the heart, kidney, brain and liver and to a lesser extent in testis, lung, spleen and adipose tissue. Very low amount in muscle (at protein level). Also expressed in the thymus (at protein level) and the diaphragm. Significantly reduced in hypertrophied hearts.

It is found in the mitochondrion matrix. It catalyses the reaction O-phospho-L-seryl-[3-methyl-2-oxobutanoate dehydrogenase] + H2O = L-seryl-[3-methyl-2-oxobutanoate dehydrogenase] + phosphate. The enzyme catalyses O-phospho-L-seryl-[protein] + H2O = L-seryl-[protein] + phosphate. The protein operates within protein modification. Functionally, serine/threonine-protein phosphatase component of macronutrients metabolism. Forms a functional kinase and phosphatase pair with BCKDK, serving as a metabolic regulatory node that coordinates branched-chain amino acids (BCAAs) with glucose and lipid metabolism via two distinct phosphoprotein targets: mitochondrial BCKDHA subunit of the branched-chain alpha-ketoacid dehydrogenase (BCKDH) complex and cytosolic ACLY, a lipogenic enzyme of Krebs cycle. At high levels of branched-chain ketoacids, dephosphorylates and activates mitochondrial BCKDH complex, a multisubunit complex consisting of three multimeric components each involved in different steps of BCAA catabolism: E1 composed of BCKDHA and BCKDHB, E2 core composed of DBT monomers, and E3 composed of DLD monomers. Tightly associates with the E2 component of BCKDH complex and dephosphorylates BCKDHA on Ser-334. Regulates the reversible phosphorylation of ACLY in response to changes in cellular carbohydrate abundance such as occurs during fasting to feeding metabolic transition. At fasting state, appears to dephosphorylate ACLY on Ser-455 and inactivate it. Refeeding stimulates MLXIPL/ChREBP transcription factor, leading to increased BCKDK to PPM1K expression ratio, phosphorylation and activation of ACLY that ultimately results in the generation of malonyl-CoA and oxaloacetate immediate substrates of de novo lipogenesis and gluconeogenesis, respectively. Recognizes phosphosites having SxS or RxxS motifs and strictly depends on Mn(2+) ions for the phosphatase activity. Regulates Ca(2+)-induced opening of mitochondrial transition pore and apoptotic cell death. The chain is Protein phosphatase Mn(2+)-dependent 1K from Mus musculus (Mouse).